Here is a 148-residue protein sequence, read N- to C-terminus: Arginine repressor (148 aa).

It belongs to the ArgR family.

The protein localises to the cytoplasm. It participates in amino-acid biosynthesis; L-arginine biosynthesis [regulation]. Its function is as follows. Regulates arginine biosynthesis genes. The protein is Arginine repressor of Koribacter versatilis (strain Ellin345).